A 372-amino-acid polypeptide reads, in one-letter code: Cell division protein FtsZ 1 (372 aa).

GTP contacts are provided by residues 51-55 (GAGCN), 138-140 (GTG), Glu169, Arg173, and Asp216. The tract at residues 352–372 (EETPAPSEEETTPVKIDIPEL) is disordered.

It belongs to the FtsZ family. In terms of assembly, homodimer. Polymerizes to form a dynamic ring structure in a strictly GTP-dependent manner. Interacts directly with several other division proteins.

Its subcellular location is the cytoplasm. Essential cell division protein that forms a contractile ring structure (Z ring) at the future cell division site. The regulation of the ring assembly controls the timing and the location of cell division. One of the functions of the FtsZ ring is to recruit other cell division proteins to the septum to produce a new cell wall between the dividing cells. Binds GTP and shows GTPase activity. This is Cell division protein FtsZ 1 from Pyrococcus horikoshii (strain ATCC 700860 / DSM 12428 / JCM 9974 / NBRC 100139 / OT-3).